Consider the following 752-residue polypeptide: Glutamate carboxypeptidase 2 (752 aa).

The Cytoplasmic portion of the chain corresponds to 1 to 19 (MWNAQQDSDSAEALGRRQR). Residue S10 is modified to Phosphoserine. Residues 20–44 (WFCAGTLVLAFTGTFIIGFLFGWFI) form a helical; Signal-anchor for type II membrane protein membrane-spanning segment. Over 45 to 752 (KPSNDSTSSV…AAAETLREVD (708 aa)) the chain is Extracellular. N-linked (GlcNAc...) asparagine glycosylation is found at N48, N78, N123, N155, and N197. The substrate site is built by R212 and N259. T271 and Y274 together coordinate Ca(2+). Positions 276–589 (ANEYAYRHEF…QVRGAMVFEL (314 aa)) are NAALADase. N338 carries N-linked (GlcNAc...) asparagine glycosylation. H379 and D389 together coordinate Zn(2+). Residue E426 coordinates substrate. E426 acts as the Nucleophile; for NAALADase activity in catalysis. E427 provides a ligand contact to Zn(2+). Residues E435 and E438 each contribute to the Ca(2+) site. D455 lines the Zn(2+) pocket. N-linked (GlcNAc...) asparagine glycosylation is found at N461 and N478. Residues 519-520 (SG), N521, 536-538 (RAR), Y554, and 554-555 (YH) contribute to the substrate site. H555 contributes to the Zn(2+) binding site. N-linked (GlcNAc...) asparagine glycosylation occurs at N615. S630 functions as the Charge relay system in the catalytic mechanism. N-linked (GlcNAc...) asparagine glycosylation is present at N640. Catalysis depends on charge relay system residues D668 and H691. Residue 701–702 (KY) coordinates substrate.

This sequence belongs to the peptidase M28 family. M28B subfamily. As to quaternary structure, homodimer. The cofactor is Zn(2+). Widely expressed throughout brain regions with highest levels in the hippocampus, dentate gyrus, priform cortex, choroid plexus of ventricles, pineal gland, anterior lobe of the pituitary gland and supraoptic nucleus. High levels also found in the cerebral cortex, substantia nigra, pontine nucleus and the granule cell layer of cerebellum. Highly expressed in astrocytes and non-myelinating Schwann cells. Also expressed in kidney, localizing to the proximal brush border of the renal tube.

It localises to the cell membrane. The catalysed reaction is Release of an unsubstituted, C-terminal glutamyl residue, typically from Ac-Asp-Glu or folylpoly-gamma-glutamates.. The NAALADase activity is inhibited by beta-NAAG, quisqualic acid and 2-(phosphonomethyl)glutaric acid (PMG). Its function is as follows. Has both folate hydrolase and N-acetylated-alpha-linked-acidic dipeptidase (NAALADase) activity. Has a preference for tri-alpha-glutamate peptides. In the intestine, required for the uptake of folate. In the brain, modulates excitatory neurotransmission through the hydrolysis of the neuropeptide, N-aceylaspartylglutamate (NAAG), thereby releasing glutamate. Also exhibits a dipeptidyl-peptidase IV type activity. In vitro, cleaves Gly-Pro-AMC. The sequence is that of Glutamate carboxypeptidase 2 (Folh1) from Rattus norvegicus (Rat).